The primary structure comprises 226 residues: Glutathione peroxidase 3 (226 aa).

The first 24 residues, 1–24 (MARLLQASCLLSLLLAGFVPQSRG), serve as a signal peptide directing secretion. Sec73 is an active-site residue. Sec73 is a non-standard amino acid (selenocysteine).

It belongs to the glutathione peroxidase family. In terms of assembly, homotetramer. Secreted in plasma.

Its subcellular location is the secreted. The catalysed reaction is 2 glutathione + H2O2 = glutathione disulfide + 2 H2O. The enzyme catalyses tert-butyl hydroperoxide + 2 glutathione = tert-butanol + glutathione disulfide + H2O. In terms of biological role, protects cells and enzymes from oxidative damage, by catalyzing the reduction of hydrogen peroxide, lipid peroxides and organic hydroperoxide, by glutathione. The protein is Glutathione peroxidase 3 of Pongo pygmaeus (Bornean orangutan).